Consider the following 373-residue polypeptide: Histidinol-phosphate aminotransferase (373 aa).

An N6-(pyridoxal phosphate)lysine modification is found at lysine 233.

Belongs to the class-II pyridoxal-phosphate-dependent aminotransferase family. Histidinol-phosphate aminotransferase subfamily. In terms of assembly, homodimer. The cofactor is pyridoxal 5'-phosphate.

It carries out the reaction L-histidinol phosphate + 2-oxoglutarate = 3-(imidazol-4-yl)-2-oxopropyl phosphate + L-glutamate. Its pathway is amino-acid biosynthesis; L-histidine biosynthesis; L-histidine from 5-phospho-alpha-D-ribose 1-diphosphate: step 7/9. The protein is Histidinol-phosphate aminotransferase of Nitratidesulfovibrio vulgaris (strain ATCC 29579 / DSM 644 / CCUG 34227 / NCIMB 8303 / VKM B-1760 / Hildenborough) (Desulfovibrio vulgaris).